A 172-amino-acid chain; its full sequence is Male-specific submandibular salivary gland protein (172 aa).

An N-terminal signal peptide occupies residues 1–15 (MVKFLLLALALGVSC). The N-linked (GlcNAc...) asparagine glycan is linked to Asn-41. Cystine bridges form between Cys-60–Cys-64 and Cys-79–Cys-170.

Belongs to the calycin superfamily. Lipocalin family. In terms of processing, N-glycosylated. In terms of tissue distribution, expressed in acinar cells of the submandibular salivary gland from where it is secreted into saliva (at protein level). Also released from the submandibular salivary gland into blood and excreted in urine (at protein level). Expressed in the lacrimal gland from where it is secreted into tears (at protein level).

It localises to the secreted. The protein localises to the cytoplasm. The protein is Male-specific submandibular salivary gland protein of Mesocricetus auratus (Golden hamster).